The primary structure comprises 481 residues: NADH-quinone oxidoreductase subunit N (481 aa).

The next 14 membrane-spanning stretches (helical) occupy residues 11–31 (AYPEIFLLLMVCVVMLADLFA), 37–57 (YLAFYLSLLTLAGCALVTCGI), 74–94 (AMSDILKLLIYVTVAAVLIYS), 103–123 (LLKGEFFSLALFATLGMMVMV), 128–148 (LITLYLGLELLSLSLYAMVAL), 162–182 (FFVLGALASGFLLYGMSMLYG), 205–225 (IFIIGLVFVVAGIGFKLSAVP), 238–258 (PTAVTLFIGSAPKFAAFGFVM), 272–292 (WQGMLVLLAVASMAVGNIAAI), 300–320 (MLAYSTISHMGFVLLGFIAAG), 328–348 (MFYVIAYVLMTLGAFGIIMLV), 371–391 (LAFMMLLVMFSMAGIPPMIGF), 405–425 (GYIWLVVVAVMLSLIGAFYYL), and 457–477 (LAIILLGMFPQMLMGLSLSAI).

This sequence belongs to the complex I subunit 2 family. NDH-1 is composed of 14 different subunits. Subunits NuoA, H, J, K, L, M, N constitute the membrane sector of the complex.

Its subcellular location is the cell inner membrane. It catalyses the reaction a quinone + NADH + 5 H(+)(in) = a quinol + NAD(+) + 4 H(+)(out). In terms of biological role, NDH-1 shuttles electrons from NADH, via FMN and iron-sulfur (Fe-S) centers, to quinones in the respiratory chain. The immediate electron acceptor for the enzyme in this species is believed to be ubiquinone. Couples the redox reaction to proton translocation (for every two electrons transferred, four hydrogen ions are translocated across the cytoplasmic membrane), and thus conserves the redox energy in a proton gradient. The chain is NADH-quinone oxidoreductase subunit N from Nitrosomonas europaea (strain ATCC 19718 / CIP 103999 / KCTC 2705 / NBRC 14298).